Here is a 92-residue protein sequence, read N- to C-terminus: Small ribosomal subunit protein uS19 (92 aa).

It belongs to the universal ribosomal protein uS19 family.

Functionally, protein S19 forms a complex with S13 that binds strongly to the 16S ribosomal RNA. The chain is Small ribosomal subunit protein uS19 from Geobacillus sp. (strain WCH70).